Reading from the N-terminus, the 279-residue chain is 3-methyl-2-oxobutanoate hydroxymethyltransferase (279 aa).

Residues Asp-43 and Asp-82 each contribute to the Mg(2+) site. 3-methyl-2-oxobutanoate contacts are provided by residues Asp-43–Ser-44, Asp-82, and Lys-112. Position 114 (Glu-114) interacts with Mg(2+). The active-site Proton acceptor is Glu-181.

The protein belongs to the PanB family. Homodecamer; pentamer of dimers. The cofactor is Mg(2+).

It is found in the cytoplasm. It carries out the reaction 3-methyl-2-oxobutanoate + (6R)-5,10-methylene-5,6,7,8-tetrahydrofolate + H2O = 2-dehydropantoate + (6S)-5,6,7,8-tetrahydrofolate. Its pathway is cofactor biosynthesis; (R)-pantothenate biosynthesis; (R)-pantoate from 3-methyl-2-oxobutanoate: step 1/2. Functionally, catalyzes the reversible reaction in which hydroxymethyl group from 5,10-methylenetetrahydrofolate is transferred onto alpha-ketoisovalerate to form ketopantoate. The sequence is that of 3-methyl-2-oxobutanoate hydroxymethyltransferase from Shouchella clausii (strain KSM-K16) (Alkalihalobacillus clausii).